A 275-amino-acid polypeptide reads, in one-letter code: Phosphatidylglycerol--prolipoprotein diacylglyceryl transferase (275 aa).

Transmembrane regions (helical) follow at residues 20-40 (FTIH…LLLA), 58-78 (LLWA…VFQW), 88-108 (IIAI…GFIV), and 118-138 (LSSW…QGIG). A 1,2-diacyl-sn-glycero-3-phospho-(1'-sn-glycerol) is bound at residue R139. 2 helical membrane passes run 209-229 (GEIF…IEGM) and 239-259 (IRIS…ILII).

This sequence belongs to the Lgt family.

The protein resides in the cell membrane. The enzyme catalyses L-cysteinyl-[prolipoprotein] + a 1,2-diacyl-sn-glycero-3-phospho-(1'-sn-glycerol) = an S-1,2-diacyl-sn-glyceryl-L-cysteinyl-[prolipoprotein] + sn-glycerol 1-phosphate + H(+). The protein operates within protein modification; lipoprotein biosynthesis (diacylglyceryl transfer). Its function is as follows. Catalyzes the transfer of the diacylglyceryl group from phosphatidylglycerol to the sulfhydryl group of the N-terminal cysteine of a prolipoprotein, the first step in the formation of mature lipoproteins. The chain is Phosphatidylglycerol--prolipoprotein diacylglyceryl transferase from Limosilactobacillus reuteri (strain DSM 20016) (Lactobacillus reuteri).